The sequence spans 316 residues: MGLAGTKVKQRFGLDPRNTNWSNDTSRFGHQYLERMGWKPGKGLGLVEHATTSHVKVSIKDDNLGLGSKLAKKQKTDEFDSGECSGLDVFQRILGRLNGKEDQINKEIERKRKDNIINGKWGIQFIKGEVLQSTWDKEAKKLLDKGTTKKRKIDSVDSSEESTTSSDSKQHKKKKIKKDRKEKEEKKTEKENSEIKKKKKEKKEKKEKKEKKDKNEKKEKKDKNEKKEKKDKNEEKEKKEKKEKKEKKDKKDKKDKKDKKEKKEVKEVTRDSMLMPKEQLNQQIATRLSVRSKWIKQKRASVMDAKALNEIFMVTS.

The 47-residue stretch at 25-71 folds into the G-patch domain; the sequence is TSRFGHQYLERMGWKPGKGLGLVEHATTSHVKVSIKDDNLGLGSKLA. Residues 146–280 form a disordered region; sequence GTTKKRKIDS…DSMLMPKEQL (135 aa). Positions 179 to 195 are enriched in basic and acidic residues; sequence DRKEKEEKKTEKENSEI. The segment covering 196–209 has biased composition (basic residues); it reads KKKKKEKKEKKEKK. Over residues 210-240 the composition is skewed to basic and acidic residues; it reads EKKDKNEKKEKKDKNEKKEKKDKNEEKEKKE. The segment covering 241 to 260 has biased composition (basic residues); sequence KKEKKEKKDKKDKKDKKDKK. Basic and acidic residues predominate over residues 261-270; the sequence is EKKEVKEVTR.

It belongs to the PINX1 family.

The protein resides in the nucleus. Its subcellular location is the nucleolus. In terms of biological role, involved in rRNA-processing at A0, A1 and A2 sites and negatively regulates telomerase. The protein is Protein PXR1 (PXR1) of Debaryomyces hansenii (strain ATCC 36239 / CBS 767 / BCRC 21394 / JCM 1990 / NBRC 0083 / IGC 2968) (Yeast).